A 199-amino-acid chain; its full sequence is COMM domain-containing protein 2 (199 aa).

Residues 123–190 (SYHNLEWRLD…QALEEMKTNH (68 aa)) enclose the COMM domain.

Belongs to the COMM domain-containing protein 2 family. In terms of assembly, component of the commander complex consisting of the CCC subcomplex and the retriever subcomplex. Component of the CCC (COMMD/CCDC22/CCDC93) subcomplex consisting of COMMD1, COMMD2, COMMD3, COMMD4, COMMD5, COMMD6, COMMD7, COMMD8, COMMD9, COMMD10, CCDC22 and CCDC93; within the complex forms a heterodimer with COMMD3. Interacts with RELA, RELB, NFKB1/p105, NFKB2/p100. Interacts with CCDC22, CCDC93, SCNN1B, CUL3, CUL4B, CUL5, CUL7. As to expression, ubiquitous.

Its subcellular location is the cytoplasm. Functionally, scaffold protein in the commander complex that is essential for endosomal recycling of transmembrane cargos; the commander complex is composed of the CCC subcomplex and the retriever subcomplex. May modulate activity of cullin-RING E3 ubiquitin ligase (CRL) complexes. May down-regulate activation of NF-kappa-B. The sequence is that of COMM domain-containing protein 2 (COMMD2) from Homo sapiens (Human).